Reading from the N-terminus, the 311-residue chain is Olfactory receptor 8G1 (311 aa).

At 1-25 (MSGENNSSVTEFILAGLSEQPELQL) the chain is on the extracellular side. 2 N-linked (GlcNAc...) asparagine glycosylation sites follow: N5 and N6. Residues 26–46 (PLFLLFLGIYVVTVVGNLGMT) form a helical membrane-spanning segment. Over 47–54 (TLIWLSSH) the chain is Cytoplasmic. The chain crosses the membrane as a helical span at residues 55–75 (LHTPMYYFLSSLSFIDFCHST). Residues 76 to 99 (VITPKMLVNFVTEKNIISYPECMT) lie on the Extracellular side of the membrane. C97 and C189 are joined by a disulfide. The chain crosses the membrane as a helical span at residues 100 to 120 (QLYFFLVFAIAECHMLAAMAY). Over 121–139 (DRYMAICSPLLYSVIISNK) the chain is Cytoplasmic. Residues 140–160 (ACFSLILGVYIIGLVCASVHT) traverse the membrane as a helical segment. At 161-197 (GCMFRVQFCKFDLINHYFCDLLPLLKLSCSSIYVNKL) the chain is on the extracellular side. A helical transmembrane segment spans residues 198-217 (LILCVGAFNILVPSLTILCS). At 218–237 (YIFIIASILHIRSTEGRSKA) the chain is on the cytoplasmic side. Residues 238 to 258 (FSTCSSHMLAVVIFFGSAAFM) form a helical membrane-spanning segment. The Extracellular segment spans residues 259 to 271 (YLQPSSISSMDQG). A helical transmembrane segment spans residues 272–292 (KVSSVFYTIIVPMLNPLIYSL). At 293–311 (RNKDVHVSLKKMLQRRTLL) the chain is on the cytoplasmic side.

Belongs to the G-protein coupled receptor 1 family.

It localises to the cell membrane. Its function is as follows. Odorant receptor. The polypeptide is Olfactory receptor 8G1 (OR8G1) (Homo sapiens (Human)).